Consider the following 156-residue polypeptide: Small ribosomal subunit protein uS7 (156 aa).

This sequence belongs to the universal ribosomal protein uS7 family. In terms of assembly, part of the 30S ribosomal subunit. Contacts proteins S9 and S11.

Functionally, one of the primary rRNA binding proteins, it binds directly to 16S rRNA where it nucleates assembly of the head domain of the 30S subunit. Is located at the subunit interface close to the decoding center, probably blocks exit of the E-site tRNA. This is Small ribosomal subunit protein uS7 from Synechococcus elongatus (strain ATCC 33912 / PCC 7942 / FACHB-805) (Anacystis nidulans R2).